Here is a 390-residue protein sequence, read N- to C-terminus: Curcumin synthase 3 (390 aa).

The active site involves Cys164.

This sequence belongs to the thiolase-like superfamily. Chalcone/stilbene synthases family. Homodimer.

It catalyses the reaction (E)-feruloylacetyl-CoA + (E)-feruloyl-CoA + H2O = curcumin + CO2 + 2 CoA. It carries out the reaction (E)-feruloylacetyl-CoA + (E)-4-coumaroyl-CoA + H2O = demethoxycurcumin + CO2 + 2 CoA. The enzyme catalyses (4-coumaroyl)acetyl-CoA + 4-coumaroyl-CoA + H2O = bisdemethoxycurcumin + CO2 + 2 CoA. It participates in secondary metabolite biosynthesis; flavonoid biosynthesis. Its function is as follows. Catalyzes the synthesis of curcumin by condensing feruloyl-CoA with a diketide-CoA in the curcuminoid biosynthesis. Also acts as a demethoxycurcumin synthase by accepting 4-coumaroyl-CoA as a starter substrate instead of feruloyl-CoA. The chain is Curcumin synthase 3 (CURS3) from Curcuma longa (Turmeric).